Consider the following 115-residue polypeptide: Chaperone protein PrsD (115 aa).

Belongs to the periplasmic pilus chaperone family.

It is found in the periplasm. Its function is as follows. Mediates assembly of pili by forming soluble multimeric complexes with pili subunits as an intermediate step in the assembly process. In Escherichia coli, this protein is Chaperone protein PrsD (prsD).